The following is a 48-amino-acid chain: Large ribosomal subunit protein bL33B (48 aa).

This sequence belongs to the bacterial ribosomal protein bL33 family.

The chain is Large ribosomal subunit protein bL33B from Streptococcus thermophilus (strain CNRZ 1066).